The primary structure comprises 1485 residues: Dicer-like protein 2 (1485 aa).

Low complexity predominate over residues 1-11 (MSSQDESASSS). The interval 1 to 61 (MSSQDESASS…EPQPSGNGPR (61 aa)) is disordered. The Helicase ATP-binding domain maps to 72-250 (MFQASMQQNI…MEDLESSLDS (179 aa)). Position 85–92 (85–92 (MDTGSGKT)) interacts with ATP. The short motif at 193-196 (DEAH) is the DEAH box element. A Helicase C-terminal domain is found at 415 to 579 (KLQVLLRILR…RYENDMRELD (165 aa)). One can recognise a Dicer dsRNA-binding fold domain in the interval 609 to 712 (AKGHLEHFCR…LPIRESDFVD (104 aa)). 2 RNase III domains span residues 988-1127 (AQEL…IEGG) and 1168-1358 (LGPL…VDSG). Mg(2+) is bound by residues Glu1208, Asp1344, and Glu1347. The DRBM domain occupies 1388–1469 (HPKEELGRVA…ALEVIRVWEE (82 aa)).

It belongs to the helicase family. Dicer subfamily. The cofactor is Mg(2+). It depends on Mn(2+) as a cofactor.

Functionally, dicer-like endonuclease involved in cleaving double-stranded RNA in the RNA interference (RNAi) pathway. Produces 21 to 25 bp dsRNAs (siRNAs) which target the selective destruction of homologous RNAs leading to sequence-specific suppression of gene expression, called post-transcriptional gene silencing (PTGS). Part of a broad host defense response against viral infection and transposons. The protein is Dicer-like protein 2 (DCL2) of Pyricularia oryzae (strain 70-15 / ATCC MYA-4617 / FGSC 8958) (Rice blast fungus).